The chain runs to 570 residues: Urease subunit alpha (570 aa).

The 436-residue stretch at 135–570 (GGLDIHVHFN…ELPLAQRYHL (436 aa)) folds into the Urease domain. Positions 140, 142, and 219 each coordinate Ni(2+). At lysine 219 the chain carries N6-carboxylysine. Histidine 221 provides a ligand contact to substrate. Histidine 248 and histidine 274 together coordinate Ni(2+). The active-site Proton donor is histidine 322. Ni(2+) is bound at residue aspartate 362.

It belongs to the metallo-dependent hydrolases superfamily. Urease alpha subunit family. Heterotrimer of UreA (gamma), UreB (beta) and UreC (alpha) subunits. Three heterotrimers associate to form the active enzyme. It depends on Ni cation as a cofactor. Post-translationally, carboxylation allows a single lysine to coordinate two nickel ions.

Its subcellular location is the cytoplasm. It catalyses the reaction urea + 2 H2O + H(+) = hydrogencarbonate + 2 NH4(+). It participates in nitrogen metabolism; urea degradation; CO(2) and NH(3) from urea (urease route): step 1/1. In Natronomonas pharaonis (strain ATCC 35678 / DSM 2160 / CIP 103997 / JCM 8858 / NBRC 14720 / NCIMB 2260 / Gabara) (Halobacterium pharaonis), this protein is Urease subunit alpha.